The following is an 875-amino-acid chain: Valine--tRNA ligase (875 aa).

The 'HIGH' region signature appears at 44–54; the sequence is PNVTGKLHLGH. The short motif at 520-524 is the 'KMSKS' region element; that stretch reads KMSKS. Lys523 contacts ATP. Residues 804–875 adopt a coiled-coil conformation; it reads LEGLINIEEE…VRARLAQLKQ (72 aa).

It belongs to the class-I aminoacyl-tRNA synthetase family. ValS type 1 subfamily. As to quaternary structure, monomer.

The protein resides in the cytoplasm. The enzyme catalyses tRNA(Val) + L-valine + ATP = L-valyl-tRNA(Val) + AMP + diphosphate. Its function is as follows. Catalyzes the attachment of valine to tRNA(Val). As ValRS can inadvertently accommodate and process structurally similar amino acids such as threonine, to avoid such errors, it has a 'posttransfer' editing activity that hydrolyzes mischarged Thr-tRNA(Val) in a tRNA-dependent manner. The sequence is that of Valine--tRNA ligase from Anoxybacillus flavithermus (strain DSM 21510 / WK1).